Consider the following 354-residue polypeptide: Prephenate dehydrogenase (354 aa).

In terms of domain architecture, Prephenate/arogenate dehydrogenase spans 2–283 (KKILIIGLGL…AMEIHKGALP (282 aa)). Residue 3–33 (KILIIGLGLIGSSIALGIKKAHPEFEILGSD) coordinates NAD(+). The ACT domain occupies 287–354 (DLFISVPDEK…IEKATDFTVV (68 aa)).

This sequence belongs to the prephenate/arogenate dehydrogenase family.

It carries out the reaction prephenate + NAD(+) = 3-(4-hydroxyphenyl)pyruvate + CO2 + NADH. It participates in amino-acid biosynthesis; L-tyrosine biosynthesis; (4-hydroxyphenyl)pyruvate from prephenate (NAD(+) route): step 1/1. The polypeptide is Prephenate dehydrogenase (tyrA) (Lactococcus lactis subsp. cremoris (strain MG1363)).